A 212-amino-acid polypeptide reads, in one-letter code: Large ribosomal subunit protein uL3 (212 aa).

Positions Tyr119–Met146 are disordered.

The protein belongs to the universal ribosomal protein uL3 family. As to quaternary structure, part of the 50S ribosomal subunit. Forms a cluster with proteins L14 and L19.

One of the primary rRNA binding proteins, it binds directly near the 3'-end of the 23S rRNA, where it nucleates assembly of the 50S subunit. The polypeptide is Large ribosomal subunit protein uL3 (Lactobacillus helveticus (strain DPC 4571)).